A 498-amino-acid chain; its full sequence is L-xylulose/3-keto-L-gulonate kinase (498 aa).

It belongs to the FGGY kinase family. Homodimer.

It carries out the reaction L-xylulose + ATP = L-xylulose 5-phosphate + ADP + H(+). The enzyme catalyses 3-dehydro-L-gulonate + ATP = 3-dehydro-L-gulonate 6-phosphate + ADP + H(+). Its function is as follows. Catalyzes the phosphorylation of L-xylulose and 3-keto-L-gulonate. Is involved in L-lyxose utilization via xylulose, and may also be involved in the utilization of 2,3-diketo-L-gulonate. In Escherichia coli (strain K12), this protein is L-xylulose/3-keto-L-gulonate kinase (lyx).